The chain runs to 419 residues: MKRKKKEEEEEKLIVTREFAKRWRDLSGQNHWKGMLQPLDQDLREYIIHYGEMAQAGYDTFNINTESQFAGASIYSRKDFFAKVGLEIAHPYTKYKVTKFIYATSDIHVPESFLLFPISREGWSKESNWMGYVAVTDDQGTALLGRRDIVVSWRGSVQPLEWVEDFEFGLVNAIKIFGERNDQVQIHQGWYSIYMSQDERSPFTKTNARDQVLREVGRLLEKYKDEEVSITICGHSLGAALATLSATDIVANGYNRPKSRPDKSCPVTAFVFASPRVGDSDFRKLFSGLEDIRVLRTRNLPDVIPIYPPIGYSEVGDEFPIDTRKSPYMKSPGNLATFHCLEGYLHGVAGTQGTNKADLFRLDVERAIGLVNKSVDGLKDECMVPGKWRVLKNKGMAQQDDGSWELVDHEIDDNEDLDF.

Coiled-coil stretches lie at residues 1-21 (MKRK…EFAK) and 207-227 (NARD…KDEE). S236 acts as the Acyl-ester intermediate in catalysis. Catalysis depends on charge relay system residues S236, D302, and H339.

This sequence belongs to the AB hydrolase superfamily. Lipase family. As to expression, expressed in seedlings, stems and siliques, and, to a lower extent, in flowers.

It is found in the cytoplasm. Its function is as follows. Acylhydrolase that catalyzes the hydrolysis of 1,3-diacylglycerol (1,3-DAG) and 1-monoacylglycerol (1-MAG) at the sn-1 position. High activity toward 1,3-DAG and 1-MAG, but low activity toward 1,2-diacylglycerol (1,2-DAG) and 1-lysophosphatidylcholine (1-LPC), and no activity toward phosphatidylcholine (PC), monogalactosyldiacylglycerol (MGDG), digalactosyldiacylglycerol (DGDG), triacylglycerol (TAG) and 2-monoacylglycerol (2-MAG). May be involved in the negative regulation of seedling establishment by inhibiting the breakdown, beta-oxidation and mobilization of seed storage oils. This is Phospholipase A1-IIgamma (DSEL) from Arabidopsis thaliana (Mouse-ear cress).